The following is a 162-amino-acid chain: tRNA-specific adenosine deaminase (162 aa).

Positions 3 to 115 (DSDKYFMKCA…KNLQKYICCK (113 aa)) constitute a CMP/dCMP-type deaminase domain. Histidine 54 is a binding site for Zn(2+). Glutamate 56 (proton donor) is an active-site residue. Zn(2+) is bound by residues cysteine 84 and cysteine 87.

This sequence belongs to the cytidine and deoxycytidylate deaminase family. As to quaternary structure, homodimer. Zn(2+) is required as a cofactor.

It catalyses the reaction adenosine(34) in tRNA + H2O + H(+) = inosine(34) in tRNA + NH4(+). In terms of biological role, catalyzes the deamination of adenosine to inosine at the wobble position 34 of tRNA(Arg2). The protein is tRNA-specific adenosine deaminase of Buchnera aphidicola subsp. Baizongia pistaciae (strain Bp).